A 396-amino-acid polypeptide reads, in one-letter code: Probable splicing factor YJU2B (396 aa).

The disordered stretch occupies residues 1–26; that stretch reads MGERKGVNKYYPPDFNPEKHGSLNRY. Phosphoserine is present on S40. Positions 182–214 form a coiled coil; sequence LNSMLRRRFREKKKAIQEEEERDQALQAKASLT. The interval 295–396 is disordered; it reads IVRRRSRDVP…VADYSDSESE (102 aa). S306 carries the phosphoserine modification. Over residues 315-327 the composition is skewed to basic and acidic residues; it reads KSGEPRVPEEAAQ. A compositionally biased stretch (polar residues) spans 340 to 350; sequence TTETPKCSSPR. Position 362 is a phosphoserine (S362).

It belongs to the CWC16 family.

It localises to the nucleus. Its function is as follows. May be involved in mRNA splicing. The polypeptide is Probable splicing factor YJU2B (Homo sapiens (Human)).